The chain runs to 369 residues: MAMMVDPPNGMGNQGKHYYTMWQTLFEIDTKYVPIKPIGRGAYGIVCSSINRATNEKVAIKKINNVFDNRVDALRTLRELKLLRHLRHENVIALKDIMMPVHRRSFKDVYLVYELMDTDLHQIIKSSQPLSNDHCQYFLFQLLRGLKYLHSAGILHRDLKPGNLLVNANCDLKICDFGLARTNNTKGQFMTEYVVTRWYRAPELLLCCDNYGTSIDVWSVGCIFAELLGRKPIFPGTECLNQLKLIVNVLGTMSEADIEFIDNPKARKYIKTLPYTPGIPLTSMYPQAHPLAIDLLQKMLVFDPSKRISVTEALEHPYMSPLYDPSANPPAQVPIDLDIDENLGVDMIREMMWQEMLHYHPEVVAGVNM.

In terms of domain architecture, Protein kinase spans Y32–M319. Residues I38 to V46 and K61 contribute to the ATP site. D158 functions as the Proton acceptor in the catalytic mechanism. Phosphothreonine is present on T191. Positions T191–Y193 match the TXY motif. A Phosphotyrosine modification is found at Y193.

The protein belongs to the protein kinase superfamily. CMGC Ser/Thr protein kinase family. MAP kinase subfamily. Dually phosphorylated on Thr-191 and Tyr-193, which activates the enzyme. Expressed in leaves and panicles.

It catalyses the reaction L-seryl-[protein] + ATP = O-phospho-L-seryl-[protein] + ADP + H(+). The catalysed reaction is L-threonyl-[protein] + ATP = O-phospho-L-threonyl-[protein] + ADP + H(+). Activated by threonine and tyrosine phosphorylation. The sequence is that of Mitogen-activated protein kinase 4 (MPK4) from Oryza sativa subsp. japonica (Rice).